We begin with the raw amino-acid sequence, 681 residues long: T-box-containing protein 2 (681 aa).

The T-box DNA-binding region spans 149 to 323 (LWDQFSRAGT…NNPFAKGFRE (175 aa)). Disordered stretches follow at residues 316–351 (PFAK…EQRR), 456–489 (GITS…NQSN), 521–558 (PNIN…LIPG), and 589–611 (ESGE…CQSG). The segment covering 470 to 489 (NSFTYYNSSSPSSSDSNQSN) has biased composition (low complexity). The span at 521–534 (PNINIPNTVETNVH) shows a compositional bias: polar residues.

In terms of assembly, monomer. Differentiating muscle and tailbud tip.

It is found in the nucleus. Involved in the transcriptional regulation of genes required for muscle differentiation. Binds to a palindromic site (called T site) and activates gene transcription when bound to such a site. The chain is T-box-containing protein 2 (T2) from Halocynthia roretzi (Sea squirt).